Consider the following 186-residue polypeptide: Ribosome-recycling factor (186 aa).

A disordered region spans residues 135–156 (DANDEVKKLQKDKAVSEDEGKK).

Belongs to the RRF family.

It is found in the cytoplasm. Its function is as follows. Responsible for the release of ribosomes from messenger RNA at the termination of protein biosynthesis. May increase the efficiency of translation by recycling ribosomes from one round of translation to another. This chain is Ribosome-recycling factor, found in Bdellovibrio bacteriovorus (strain ATCC 15356 / DSM 50701 / NCIMB 9529 / HD100).